A 1395-amino-acid polypeptide reads, in one-letter code: MLSRPKPGESEVDLLRFQSQFLAAGATPAVQLVKKGSRRAGDANLEQPPLQDHRDVVMLDSLPDLPPALVPAPPKRARPSPGHLLPEHEDPEERLHRHDQHITAVLTKIIERDTSSMPVNLPVSSGVAFPPVFHRSQGRQGKPVTAGKRSIFAQEIAARRASGAKVSPVREVESILDPPESAMTCEALTPREWGSQPPWNSYSFQGPHLVTGKGLKGQEAEQEAQTIHEENVARLQALAPEEILQEQQRLLAQLDPSLVAFLKSHSCTREQAEEKATREQRPGRPSAEVIGKEAIAPTSASVPRQENELEPETPALALPVTPQKEWLHMDTVELEKLHWTQDLPPLRRQQTQERMQARFSLQGELLAPDMDLPTHLGLHHHGEEAERAGYSLQELFHLTRSQVSQQRALALHVLAQVIGRAQAGEFGDRLVGSVLHLLLDAGFLFLLRFSLDDRVDGVIAAAVRALRALLVAPGDEELLDSTFSWYHGALMFALMPSQEDKEDEDEDEEPPAEKAKTKSPEEGNRPPSDLARHDIIKGLLATNLLPRLRYVLEVTCPGPSVVLDILTVLIRLARHSLESATRVLECPRLVETVVREFLPTSWSPMGSGPTSSLHRVPCAPAMKLLRVLASASRNIAARLLSGFDLRSRLSRFIAEDPQDLALPLEEAETLSTEAFRLWAVAASYGLGSDLYRELYPVLMQALQDVPKELSSPPPRPLAVQRIASLLTLLTQLTLAAGHIAPEHNSHSAEASLLAGSSSVTWTQVSGLQPLVEPCLRQTLKLLPRPEMWSALGPVPTACLLFLDAYYQAWSQQPGLCPEDWLQDMERLSEGLLLPLLKHPSLGSLWDSLGCCSPLCNPQSCAVAPETISSLASLGCAGGHPPLSLAGSASPFPFLTALLSLLNTLGRIHKGLCGQLATVLAAPGLQDYFLRCVAPVAALHLTPFSAWALRHEYHLQYLALTLAQRAATLQPPMSGTDAALCHGMALALLGRLLPGSEHLAHELMLSCVFRLEFLPERASGGPEAADFSDRLSLGSGGDLGCGRGALLAQACQDLPSIRSCYLTHCSLARASLLASQALYRGELQRVPALLLPVPKEPLLPTDWPFLPLIQLYHRASDTPSGLPPADTVGTALRALQWVLVLESWRPRALWAVSPAARLARLMCVFLVDSELFRETPIQRLVAALLARLCQPEVLSNLNLDCPLPGLTSFPDLYANFLEHFEAVSFGDHLFGALILLPLQRRFSVTLRLALFGEHVGALRALGLPLTQLPVSLECYTAPPEDNLALLQLYFRALVTGALRPRWCPVLYAVAVAHVNSFIFSQDPNNSDEIKAACRSMLQKTWLLTDEGLRQHLLHYKLPNSALPEGFELYPQLPPLRQQYLQKLRISGVLPNGVSDT.

Disordered regions lie at residues 34-53 (KKGS…LQDH), 62-96 (LPDL…ERLH), and 269-312 (REQA…LEPE). The segment covering 64–74 (DLPPALVPAPP) has biased composition (pro residues). Composition is skewed to basic and acidic residues over residues 85–96 (LPEHEDPEERLH) and 269–282 (REQA…EQRP). Residue threonine 321 is modified to Phosphothreonine. The segment at 498-530 (QEDKEDEDEDEEPPAEKAKTKSPEEGNRPPSDL) is disordered. The segment covering 500–510 (DKEDEDEDEEP) has biased composition (acidic residues). Residues 511–530 (PAEKAKTKSPEEGNRPPSDL) are compositionally biased toward basic and acidic residues.

This sequence belongs to the RPAP1 family. Part of an RNA polymerase II complex that contains POLR2A, POLR2B, POLR2C, POLR2D, POLR2E, POLR2F, POLR2G, POLR2H, POLR2I, POLR2J, POLR2K, POLR2L, RPAP1, FCP1 plus the general transcription factors TFIIB and TFIIF.

It is found in the nucleus. Forms an interface between the RNA polymerase II enzyme and chaperone/scaffolding protein, suggesting that it is required to connect RNA polymerase II to regulators of protein complex formation. Required for interaction of the RNA polymerase II complex with acetylated histone H3. This chain is RNA polymerase II-associated protein 1 (RPAP1), found in Bos taurus (Bovine).